The chain runs to 345 residues: D-fructose 1,6-bisphosphatase class 2/sedoheptulose 1,7-bisphosphatase (345 aa).

Mn(2+) contacts are provided by aspartate 33, glutamate 57, aspartate 97, and glutamate 100. Substrate is bound by residues 100–102 (EGT), tyrosine 131, 176–178 (RPR), and 198–200 (DGD). Glutamate 225 contacts Mn(2+).

The protein belongs to the FBPase class 2 family. As to quaternary structure, homotetramer. It depends on Mn(2+) as a cofactor.

The catalysed reaction is beta-D-fructose 1,6-bisphosphate + H2O = beta-D-fructose 6-phosphate + phosphate. The enzyme catalyses D-sedoheptulose 1,7-bisphosphate + H2O = D-sedoheptulose 7-phosphate + phosphate. Its pathway is carbohydrate biosynthesis; Calvin cycle. Its activity is regulated as follows. Inhibited by AMP and slightly innibited by hydrogen peroxyde. Its function is as follows. Catalyzes the hydrolysis of fructose 1,6-bisphosphate (Fru 1,6-P2) and sedoheptulose 1,7-bisphosphate (Sed 1,7-P2) to fructose 6-phosphate and sedoheptulose 7-phosphate, respectively. The protein is D-fructose 1,6-bisphosphatase class 2/sedoheptulose 1,7-bisphosphatase of Synechococcus elongatus (strain ATCC 33912 / PCC 7942 / FACHB-805) (Anacystis nidulans R2).